The primary structure comprises 476 residues: Protein transport protein Sec61 subunit alpha (476 aa).

At 2–33 (GIKFLEVIKPFCAVLPEIQKPERKIQFREKVL) the chain is on the cytoplasmic side. A helical membrane pass occupies residues 34 to 53 (WTAITLFIFLVCCQIPLFGI). At 54–76 (MSSDSADPFYWMRVILASNRGTL) the chain is on the lumenal side. The chain crosses the membrane as a helical span at residues 77–96 (MELGISPIVTSDLIMQLLAG). Residues 97–117 (AKIIEVGDSPKDRALFNGAQK) are Cytoplasmic-facing. A helical transmembrane segment spans residues 118–138 (LFGMIITIGQAIVYVMTGMYG). Over 139 to 144 (DPSEMG) the chain is Lumenal. The helical transmembrane segment at 145 to 165 (AGICLVIIIQLFVAGLIVLLL) threads the bilayer. Residues 166-172 (DELLQKG) are Cytoplasmic-facing. Residues 173 to 193 (YGLGSGISLLIATNICETIVW) form a helical membrane-spanning segment. Over 194–240 (KAFSPTTVNTGRGTEFEGAIIALFHLLATRTDKVRALREAFYRQNLP) the chain is Lumenal. The chain crosses the membrane as a helical span at residues 241–261 (NLMNLIATVFVFAVVIYFQGF). Topologically, residues 262-288 (RVDLPIKSARYRGQYNTYPIKLFYTSN) are cytoplasmic. The helical transmembrane segment at 289–309 (IPIILQSALVSNLYVISQMLS) threads the bilayer. Residues 310 to 354 (TRFSGNFIVNLLGTWSDTSTGGPARAYPVGGLCYFLSPPESFGSV) lie on the Lumenal side of the membrane. The helical transmembrane segment at 355–375 (LDDPVHAAIYIVFMLGSCAFF) threads the bilayer. The Cytoplasmic portion of the chain corresponds to 376 to 420 (SKTWIEVSGSSAKDVAKQLKEQQMVMRGHRETSMVHELNRYIPTA). The chain crosses the membrane as a helical span at residues 421 to 441 (AAFGGLCIGGLSVMADFLGAI). Residues 442–445 (GSGT) lie on the Lumenal side of the membrane. A helical membrane pass occupies residues 446–462 (GILLAVTIIYQYFEIFV). Residues 463–476 (KEQSEMGSMGGLFF) lie on the Cytoplasmic side of the membrane.

The protein belongs to the SecY/SEC61-alpha family. As to quaternary structure, the SEC61 channel-forming translocon complex consists of channel-forming core components SEC61A1, SEC61B and SEC61G and different auxiliary components such as SEC62 and SEC63. The SEC61 channel associates with the multi-pass translocon (MPT) complex.

Its subcellular location is the endoplasmic reticulum membrane. Component of SEC61 channel-forming translocon complex that mediates transport of signal peptide-containing precursor polypeptides across the endoplasmic reticulum (ER). Forms a ribosome receptor and a gated pore in the ER membrane, both functions required for cotranslational translocation of nascent polypeptides. May cooperate with auxiliary protein SEC62, SEC63 and HSPA5/BiP to enable post-translational transport of small presecretory proteins. The SEC61 channel is also involved in ER membrane insertion of transmembrane proteins: it mediates membrane insertion of the first few transmembrane segments of proteins, while insertion of subsequent transmembrane regions of multi-pass membrane proteins is mediated by the multi-pass translocon (MPT) complex. This Boreogadus saida (Polar cod) protein is Protein transport protein Sec61 subunit alpha (sec61a).